The chain runs to 95 residues: 6 kDa early secretory antigenic target homolog (95 aa).

It belongs to the WXG100 family. ESAT-6 subfamily. In terms of assembly, forms a tight 1:1 complex with EsxB.

The protein localises to the secreted. Functionally, a secreted protein that might play a role in virulence. This is 6 kDa early secretory antigenic target homolog (esxA) from Mycobacterium leprae (strain TN).